A 378-amino-acid polypeptide reads, in one-letter code: Glutamate 5-kinase (378 aa).

K21 contributes to the ATP binding site. The substrate site is built by S61, D148, and N160. 180–181 provides a ligand contact to ATP; the sequence is TD. In terms of domain architecture, PUA spans 286 to 364; that stretch reads RGTLVLDAGA…RRIEELLGYM (79 aa).

Belongs to the glutamate 5-kinase family.

The protein resides in the cytoplasm. It carries out the reaction L-glutamate + ATP = L-glutamyl 5-phosphate + ADP. It participates in amino-acid biosynthesis; L-proline biosynthesis; L-glutamate 5-semialdehyde from L-glutamate: step 1/2. Its function is as follows. Catalyzes the transfer of a phosphate group to glutamate to form L-glutamate 5-phosphate. This chain is Glutamate 5-kinase, found in Chromohalobacter salexigens (strain ATCC BAA-138 / DSM 3043 / CIP 106854 / NCIMB 13768 / 1H11).